Reading from the N-terminus, the 279-residue chain is MTSAAAIPTVILNDDNTMPVIGLGVGELSDAEAEQSVLAALEAGYRLIDTAAAYGNEAAVGRAIAKSGVPRGELFVTTKLATDDLGFQSSQDALRASLERLGLDYVDLYLIHWPAGSQGTYVDSWGGLMKLKELGLTRSIGVSNFHAQHLDDIIGLSFFTPAVNQIELHPLLNQAELRAVNAEHGIVTEAYSPLGVGSLLSNPAVTAIADAQDRTPAQVLIRWSLQLGNVVISRSSSPERIKSNLDVFDFELTADQMAALDGLDEGTRFRPDPETYTGS.

Residue tyrosine 54 is the Proton donor of the active site. Residues leucine 194, valine 196, isoleucine 232, arginine 234, serine 235, arginine 240, serine 243, asparagine 244, and arginine 270 each contribute to the NADPH site.

This sequence belongs to the aldo/keto reductase family.

This is Aldo-keto reductase Mvan_2161 from Mycolicibacterium vanbaalenii (strain DSM 7251 / JCM 13017 / BCRC 16820 / KCTC 9966 / NRRL B-24157 / PYR-1) (Mycobacterium vanbaalenii).